The chain runs to 925 residues: MTNANMQGKIRIYDLARDLGRDNRDVMAVCQRLGIAHKTHSSTISEQEADSIREAFQRGLPPGGRKKAKIQQQGAAAANKQQILEVRRPPVGYQPPVRTEVSQILVSTVTPAVPTEAQPLPIPTLPELPVPEQVAEQAAAPSVQEAVEPIAVSPVTSPLPIDAADVEADNYTADEDSMPISIAQTVVEAPAAPTSEAAPPEPEPTPLPAPAAEAPQPVRPPAPPAPAKPTPAPAPAPRPTAEQPSEPRRPQPPAQPPSRPEKRGGPLIAPNRGGLQPTRPVPAQPAPQTPTRSGSGIAKKGAITKAGSGSGGGRPGGPMRRRDEREAAVVDEQPKILLLSGNISVQDLAQRMHVPTTEIIKTLFMKSVMVNINQTLDQATAELVARELGYEVQAETAVAQATKTEMLDVGDIESLEVRPPVVTIMGHVDHGKTSLLDAIRSARVAEGEAGGITQHIGAYQIEVPTEAGPRKLVFLDTPGHEAFTAMRARGAKVTDITVLVVAADDGVKPQTIEAISHAKAAGVPILVAINKVDKPDANPERVKQELTEYDLVPEEWGGKTVMVPVSAKQKLNLDLLLENLLLVADYELELMANPNRQAKGTIIEANLDKARGPVATALVQNGTLHVGDIIVVGSIFGKVRALYDDRGNRVDAAPPSMPVEVLGLTDVPQAGDEFEVYSDEREARRIADERTSKARENRLQQQMASRRVSLGAFSAQAQEGELKELALIIRADVQGSVEAIRASLEKLPQDKVQLRVLQAAAGEVSETDIDLAAASNAVILSFSTTLASGARQAAEQAGVDVREYDVIYKLLEDIQLAMEGLLDPELVEEALGGAEVRQVFPVGKGQVAGCYVKEGKLLRNAQMRVRRGKEVVFEGHVDSLKRFKEDAKEVATGFECGVGSDKFASWQPGDLIECFRMVTQKRTLN.

The disordered stretch occupies residues 190 to 329; the sequence is PAAPTSEAAP…RRRDEREAAV (140 aa). 3 stretches are compositionally biased toward pro residues: residues 199-209, 217-238, and 279-288; these read PPEPEPTPLPA, PVRP…PAPR, and RPVPAQPAPQ. The segment covering 289–307 has biased composition (low complexity); that stretch reads TPTRSGSGIAKKGAITKAG. Over residues 320-329 the composition is skewed to basic and acidic residues; it reads RRRDEREAAV. In terms of domain architecture, tr-type G spans 417–589; that stretch reads VRPPVVTIMG…LLLVADYELE (173 aa). The tract at residues 426 to 433 is G1; sequence GHVDHGKT. A GTP-binding site is contributed by 426–433; that stretch reads GHVDHGKT. A G2 region spans residues 451 to 455; sequence GITQH. The segment at 476 to 479 is G3; it reads DTPG. GTP contacts are provided by residues 476-480 and 530-533; these read DTPGH and NKVD. A G4 region spans residues 530–533; it reads NKVD. The G5 stretch occupies residues 566–568; sequence SAK.

This sequence belongs to the TRAFAC class translation factor GTPase superfamily. Classic translation factor GTPase family. IF-2 subfamily.

The protein resides in the cytoplasm. Its function is as follows. One of the essential components for the initiation of protein synthesis. Protects formylmethionyl-tRNA from spontaneous hydrolysis and promotes its binding to the 30S ribosomal subunits. Also involved in the hydrolysis of GTP during the formation of the 70S ribosomal complex. In Gloeobacter violaceus (strain ATCC 29082 / PCC 7421), this protein is Translation initiation factor IF-2.